The primary structure comprises 148 residues: Lipoprotein signal peptidase (148 aa).

2 helical membrane passes run 57-77 and 88-105; these read VLLV…FIKY and VSFI…RIFY. Residues Asp-110 and Asp-129 contribute to the active site. Residues 124 to 144 form a helical membrane-spanning segment; sequence TFNIADILVVVGTIMLAIFLL.

It belongs to the peptidase A8 family.

Its subcellular location is the cell membrane. It carries out the reaction Release of signal peptides from bacterial membrane prolipoproteins. Hydrolyzes -Xaa-Yaa-Zaa-|-(S,diacylglyceryl)Cys-, in which Xaa is hydrophobic (preferably Leu), and Yaa (Ala or Ser) and Zaa (Gly or Ala) have small, neutral side chains.. Its pathway is protein modification; lipoprotein biosynthesis (signal peptide cleavage). This protein specifically catalyzes the removal of signal peptides from prolipoproteins. This is Lipoprotein signal peptidase from Clostridium novyi (strain NT).